Reading from the N-terminus, the 34-residue chain is Photosystem II reaction center protein M (34 aa).

Residues 5–25 (ILAFSATALLILFPTALLLIL) traverse the membrane as a helical segment.

The protein belongs to the PsbM family. In terms of assembly, PSII is composed of 1 copy each of membrane proteins PsbA, PsbB, PsbC, PsbD, PsbE, PsbF, PsbH, PsbI, PsbJ, PsbK, PsbL, PsbM, PsbT, PsbX, PsbY, PsbZ, Psb30/Ycf12, at least 3 peripheral proteins of the oxygen-evolving complex and a large number of cofactors. It forms dimeric complexes.

The protein resides in the plastid membrane. In terms of biological role, one of the components of the core complex of photosystem II (PSII). PSII is a light-driven water:plastoquinone oxidoreductase that uses light energy to abstract electrons from H(2)O, generating O(2) and a proton gradient subsequently used for ATP formation. It consists of a core antenna complex that captures photons, and an electron transfer chain that converts photonic excitation into a charge separation. This subunit is found at the monomer-monomer interface. In Cuscuta gronovii (Common dodder), this protein is Photosystem II reaction center protein M.